Consider the following 87-residue polypeptide: Large ribosomal subunit protein bL31B (87 aa).

It belongs to the bacterial ribosomal protein bL31 family. Type B subfamily. Part of the 50S ribosomal subunit.

In Burkholderia vietnamiensis (strain G4 / LMG 22486) (Burkholderia cepacia (strain R1808)), this protein is Large ribosomal subunit protein bL31B.